The following is a 238-amino-acid chain: MRRYLIVDDNRDFAENLAEILRDGGDEVAIAENGQEALALARKTRFDALLTDMRMPLMGGAELVHELRRIDPGAAAMVITAHVADDALEAARREGLLAVLPKPVAVPRILDLLAAARRDGLVAVVEDDSRMSDNLCEALRGRGFAAVTAASVTETERLGPVEPFCALVDLRVPGGADGDALRRLRERFPGLPVIVVTGTHEVPPVPHQGYFTKPFDTAELLSAVERLHRERGQTVVPE.

Response regulatory domains are found at residues 3-117 (RYLI…AAAR) and 121-228 (LVAV…ERLH). 2 positions are modified to 4-aspartylphosphate: D52 and D169.

In terms of processing, is diphosphorylated by GchK.

In terms of biological role, member of the two-component regulatory system GcHK/Anae109_2439. Is involved in a signal transduction system responding to oxygen availability. The chain is Response regulator receiver protein Anae109_2439 from Anaeromyxobacter sp. (strain Fw109-5).